The chain runs to 259 residues: Indole-3-glycerol phosphate synthase (259 aa).

It belongs to the TrpC family.

It carries out the reaction 1-(2-carboxyphenylamino)-1-deoxy-D-ribulose 5-phosphate + H(+) = (1S,2R)-1-C-(indol-3-yl)glycerol 3-phosphate + CO2 + H2O. Its pathway is amino-acid biosynthesis; L-tryptophan biosynthesis; L-tryptophan from chorismate: step 4/5. This chain is Indole-3-glycerol phosphate synthase, found in Dehalococcoides mccartyi (strain ATCC BAA-2100 / JCM 16839 / KCTC 5957 / BAV1).